Reading from the N-terminus, the 1398-residue chain is DNA topoisomerase 2 (1398 aa).

Residues Asn-69, Asn-103, 131-133 (SDN), and 144-151 (GRNGFGAK) contribute to the ATP site. The disordered stretch occupies residues 260 to 317 (NSNDNKNNKGQNDNNNNNNNNNDENANQNNDNLDVSLSNEPADGTPTKNNNNNNNNND). Positions 267-291 (NKGQNDNNNNNNNNNDENANQNNDN) are enriched in low complexity. 411-413 (QTK) is a binding site for ATP. One can recognise a Toprim domain in the interval 493–608 (CTLILTEGDS…SLLKHKGFLS (116 aa)). 3 residues coordinate Mg(2+): Glu-499, Asp-577, and Asp-579. A Topo IIA-type catalytic domain is found at 739 to 1191 (IPNIMDGWKP…TVETMWLKDI (453 aa)). The active-site O-(5'-phospho-DNA)-tyrosine intermediate is the Tyr-830. Positions 1012–1021 (KLKSTLTTTN) are interaction with DNA. 2 disordered regions span residues 1214-1250 (KFKV…SDSS) and 1262-1361 (NTNK…NSSI). Residues 1262–1276 (NTNKKTTTSSNNVNN) are compositionally biased toward low complexity. 2 stretches are compositionally biased toward polar residues: residues 1287–1300 (LNSN…SVSK) and 1348–1357 (DSTNDNNSEL).

Belongs to the type II topoisomerase family. In terms of assembly, homodimer. It depends on Mg(2+) as a cofactor. Requires Mn(2+) as cofactor. The cofactor is Ca(2+).

It is found in the nucleus. It carries out the reaction ATP-dependent breakage, passage and rejoining of double-stranded DNA.. Its function is as follows. Control of topological states of DNA by transient breakage and subsequent rejoining of DNA strands. Topoisomerase II makes double-strand breaks. This Plasmodium falciparum (isolate K1 / Thailand) protein is DNA topoisomerase 2 (TOP2).